The primary structure comprises 490 residues: MDPFVVLVLSLSFLLLLYLWRPSPGRGKLPPGPTPLPIFGNFLQIDMKDIRQSISNFSKTYGPVFTLYFGSQPTVVLHGYEAVKEALIDYGEEFSGRGRMPVFEKATKGLGISFSRGNVWRATRHFTVNTLRSLGMGKRTIEIKVQEEAEWLVMELKKTKGSPCDPKFIIGCAPCNVICSIIFQNRFDYKDKDFLSLIENVNEYIKIVSTPAFQVFNAFPILLDYCPGNHKTHSKHFAAIKSYLLKKIKEHEESLDVSNPRDFIDYFLIQRCQENGNQQMNYTQEHLAILVTNLFIGGTETSSLTLRFALLLLMKYPHITDKVQEEIGQVIGRHRSPCMLDRIHMPYTNAMIHEVQRYIDLAPNGLLHEVTCDTKFRDYFIPKGTAVLTSLTSVLHARKEFPNPEMFDPGHFLDENGNFKKSDYFMPFSAGKRKCVGEGLASMELFLFLTTILQNFKLKSLSDPKDIDINSIRSEFSSIPPTFQLCFIPV.

C435 provides a ligand contact to heme.

It belongs to the cytochrome P450 family. It depends on heme as a cofactor.

It is found in the endoplasmic reticulum membrane. Its subcellular location is the microsome membrane. It carries out the reaction an organic molecule + reduced [NADPH--hemoprotein reductase] + O2 = an alcohol + oxidized [NADPH--hemoprotein reductase] + H2O + H(+). This P450 is active in 15-beta-hydroxylation of steroid sulfates. The protein is Cytochrome P450 2C12, female-specific (Cyp2c12) of Rattus norvegicus (Rat).